The primary structure comprises 158 residues: Coenzyme F420 hydrogenase subunit delta (158 aa).

The protein belongs to the peptidase A31 family.

This Methanothermobacter thermautotrophicus (strain ATCC 29096 / DSM 1053 / JCM 10044 / NBRC 100330 / Delta H) (Methanobacterium thermoautotrophicum) protein is Coenzyme F420 hydrogenase subunit delta (frhD).